Reading from the N-terminus, the 206-residue chain is MKVVAFERSLQGTGASRRLRNSGKTPGIVYGAGAETQLVELDHNALWHALKKEVFHSSILDLEVAGKSQQVLLRDVQYHPFRQLVLHVDFQRVDAKKKLHTKVPLHFMNQESNPAVKLSSAVISHVINEIEIECLPSALPEFLEVDLATIEAGHSVHAKDIKLPAGVSLVAHVEAENPVVAAATIPAGAIAEGDAAAAGEGETPAA.

Belongs to the bacterial ribosomal protein bL25 family. CTC subfamily. Part of the 50S ribosomal subunit; part of the 5S rRNA/L5/L18/L25 subcomplex. Contacts the 5S rRNA. Binds to the 5S rRNA independently of L5 and L18.

Functionally, this is one of the proteins that binds to the 5S RNA in the ribosome where it forms part of the central protuberance. This Paraburkholderia phytofirmans (strain DSM 17436 / LMG 22146 / PsJN) (Burkholderia phytofirmans) protein is Large ribosomal subunit protein bL25.